The sequence spans 417 residues: Serine hydroxymethyltransferase (417 aa).

Residues leucine 121 and glycine 125–leucine 127 each bind (6S)-5,6,7,8-tetrahydrofolate. Residue lysine 230 is modified to N6-(pyridoxal phosphate)lysine. Position 355 to 357 (serine 355 to phenylalanine 357) interacts with (6S)-5,6,7,8-tetrahydrofolate.

The protein belongs to the SHMT family. As to quaternary structure, homodimer. Pyridoxal 5'-phosphate is required as a cofactor.

The protein localises to the cytoplasm. It carries out the reaction (6R)-5,10-methylene-5,6,7,8-tetrahydrofolate + glycine + H2O = (6S)-5,6,7,8-tetrahydrofolate + L-serine. It functions in the pathway one-carbon metabolism; tetrahydrofolate interconversion. Its pathway is amino-acid biosynthesis; glycine biosynthesis; glycine from L-serine: step 1/1. Functionally, catalyzes the reversible interconversion of serine and glycine with tetrahydrofolate (THF) serving as the one-carbon carrier. This reaction serves as the major source of one-carbon groups required for the biosynthesis of purines, thymidylate, methionine, and other important biomolecules. Also exhibits THF-independent aldolase activity toward beta-hydroxyamino acids, producing glycine and aldehydes, via a retro-aldol mechanism. This Legionella pneumophila (strain Corby) protein is Serine hydroxymethyltransferase.